A 222-amino-acid polypeptide reads, in one-letter code: Eukaryotic translation initiation factor 3 subunit K (222 aa).

One can recognise a PCI domain in the interval 46-208; sequence YDLEANLAVL…KIKTKNITEK (163 aa).

The protein belongs to the eIF-3 subunit K family. Component of the eukaryotic translation initiation factor 3 (eIF-3) complex. The eIF-3 complex interacts with pix.

The protein localises to the cytoplasm. Functionally, component of the eukaryotic translation initiation factor 3 (eIF-3) complex, which is involved in protein synthesis of a specialized repertoire of mRNAs and, together with other initiation factors, stimulates binding of mRNA and methionyl-tRNAi to the 40S ribosome. The eIF-3 complex specifically targets and initiates translation of a subset of mRNAs involved in cell proliferation. The chain is Eukaryotic translation initiation factor 3 subunit K from Drosophila yakuba (Fruit fly).